Here is a 119-residue protein sequence, read N- to C-terminus: NADH-quinone oxidoreductase subunit A (119 aa).

Helical transmembrane passes span 7–27 (YPVL…VSIG), 63–83 (LVAI…PWGV), and 88–108 (IGWP…LGFA).

The protein belongs to the complex I subunit 3 family. In terms of assembly, NDH-1 is composed of 14 different subunits. Subunits NuoA, H, J, K, L, M, N constitute the membrane sector of the complex.

It localises to the cell inner membrane. It carries out the reaction a quinone + NADH + 5 H(+)(in) = a quinol + NAD(+) + 4 H(+)(out). NDH-1 shuttles electrons from NADH, via FMN and iron-sulfur (Fe-S) centers, to quinones in the respiratory chain. The immediate electron acceptor for the enzyme in this species is believed to be ubiquinone. Couples the redox reaction to proton translocation (for every two electrons transferred, four hydrogen ions are translocated across the cytoplasmic membrane), and thus conserves the redox energy in a proton gradient. This is NADH-quinone oxidoreductase subunit A from Burkholderia vietnamiensis (strain G4 / LMG 22486) (Burkholderia cepacia (strain R1808)).